The sequence spans 179 residues: Large ribosomal subunit protein uL6 (179 aa).

This sequence belongs to the universal ribosomal protein uL6 family. In terms of assembly, part of the 50S ribosomal subunit.

In terms of biological role, this protein binds to the 23S rRNA, and is important in its secondary structure. It is located near the subunit interface in the base of the L7/L12 stalk, and near the tRNA binding site of the peptidyltransferase center. In Streptomyces griseus subsp. griseus (strain JCM 4626 / CBS 651.72 / NBRC 13350 / KCC S-0626 / ISP 5235), this protein is Large ribosomal subunit protein uL6.